A 257-amino-acid polypeptide reads, in one-letter code: 3-methyl-2-oxobutanoate hydroxymethyltransferase (257 aa).

2 residues coordinate Mg(2+): aspartate 42 and aspartate 86. 3-methyl-2-oxobutanoate contacts are provided by residues 42–43 (DS), aspartate 86, and lysine 116. Glutamate 118 contributes to the Mg(2+) binding site. Catalysis depends on glutamate 185, which acts as the Proton acceptor.

It belongs to the PanB family. Homodecamer; pentamer of dimers. Mg(2+) is required as a cofactor.

The protein localises to the cytoplasm. It carries out the reaction 3-methyl-2-oxobutanoate + (6R)-5,10-methylene-5,6,7,8-tetrahydrofolate + H2O = 2-dehydropantoate + (6S)-5,6,7,8-tetrahydrofolate. Its pathway is cofactor biosynthesis; (R)-pantothenate biosynthesis; (R)-pantoate from 3-methyl-2-oxobutanoate: step 1/2. Functionally, catalyzes the reversible reaction in which hydroxymethyl group from 5,10-methylenetetrahydrofolate is transferred onto alpha-ketoisovalerate to form ketopantoate. The sequence is that of 3-methyl-2-oxobutanoate hydroxymethyltransferase from Prochlorococcus marinus (strain MIT 9312).